We begin with the raw amino-acid sequence, 719 residues long: uncharacterized protein (719 aa).

Residues Ile-64 to Glu-100 are a coiled coil. Residues Gly-649–Val-718 form the S1 motif domain.

This is an uncharacterized protein from Bacillus subtilis (strain 168).